A 148-amino-acid chain; its full sequence is Large ribosomal subunit protein bL9 (148 aa).

The protein belongs to the bacterial ribosomal protein bL9 family.

Binds to the 23S rRNA. This is Large ribosomal subunit protein bL9 from Lysinibacillus sphaericus (strain C3-41).